The primary structure comprises 407 residues: Negative RAS protein regulator protein (407 aa).

3 disordered regions span residues 51 to 94, 165 to 187, and 241 to 273; these read PRII…ARQI, HPSK…NLNF, and NNNN…NVFS. Residues 55-73 are compositionally biased toward low complexity; it reads SSSNSNSNSNSNSNSNSNS. In terms of domain architecture, Myb-like spans 90-158; that stretch reads SARQIRKKWK…QCHDRFKVLY (69 aa). Residues 165 to 177 show a composition bias toward basic residues; it reads HPSKKSKQKKKKS. Residues 241-270 are compositionally biased toward low complexity; it reads NNNNNNINNSNNSNNNNSNNINRNSNHSTN.

It is found in the nucleus. In terms of biological role, negative regulator of the Ras-cyclic AMP pathway. Negatively regulate the activity of normal but not mutationally activated Ras proteins. The down-regulatory effect of RPI1 requires the presence of one of the two Ras GTPase activators, IRA1 and IRA2. The chain is Negative RAS protein regulator protein (RPI1) from Saccharomyces cerevisiae (strain ATCC 204508 / S288c) (Baker's yeast).